A 352-amino-acid polypeptide reads, in one-letter code: Biotin synthase (352 aa).

Residues Asn-44–Lys-262 form the Radical SAM core domain. Residues Cys-59, Cys-63, and Cys-66 each contribute to the [4Fe-4S] cluster site. Cys-103, Cys-134, Cys-194, and Arg-266 together coordinate [2Fe-2S] cluster.

It belongs to the radical SAM superfamily. Biotin synthase family. In terms of assembly, homodimer. The cofactor is [4Fe-4S] cluster. It depends on [2Fe-2S] cluster as a cofactor.

The catalysed reaction is (4R,5S)-dethiobiotin + (sulfur carrier)-SH + 2 reduced [2Fe-2S]-[ferredoxin] + 2 S-adenosyl-L-methionine = (sulfur carrier)-H + biotin + 2 5'-deoxyadenosine + 2 L-methionine + 2 oxidized [2Fe-2S]-[ferredoxin]. Its pathway is cofactor biosynthesis; biotin biosynthesis; biotin from 7,8-diaminononanoate: step 2/2. Its function is as follows. Catalyzes the conversion of dethiobiotin (DTB) to biotin by the insertion of a sulfur atom into dethiobiotin via a radical-based mechanism. The protein is Biotin synthase of Pseudomonas syringae pv. syringae (strain B728a).